The chain runs to 146 residues: Hemoglobin subunit beta (146 aa).

One can recognise a Globin domain in the interval 2 to 146; the sequence is QWSESERTII…VVSALGKQYH (145 aa). 2 residues coordinate heme b: His63 and His92.

This sequence belongs to the globin family. Heterotetramer of two alpha chains and two beta chains. As to expression, red blood cells.

Involved in oxygen transport from gills to the various peripheral tissues. This Pogonophryne scotti (Saddleback plunderfish) protein is Hemoglobin subunit beta (hbb).